We begin with the raw amino-acid sequence, 119 residues long: Autophagy-related protein 8 (119 aa).

The Phosphatidylethanolamine amidated glycine moiety is linked to residue Gly-116. The propeptide at 117–119 (EAL) is removed in mature form.

It belongs to the ATG8 family. In terms of assembly, conjugation to phosphatidylethanolamine (PE) leads to homodimerization. Interacts with ATG1, ATG3, ATG4, ATG7 and ATG12. Post-translationally, the C-terminal Glu-117, Ala-118 and Leu-119 residues of ATG8 are removed by ATG4 to expose Gly-116 at the C-terminus. This Gly-116 forms then a thioester bond with ATG7 (E1-like activating enzyme) before being transferred to ATG3 (the specific E2 conjugating enzyme), in order to be finally amidated with phosphatidylethanolamine. This lipid modification anchors ATG8 to membranes and can be reversed by ATG4, releasing soluble ATG8.

Its subcellular location is the cytoplasmic vesicle. The protein resides in the cvt vesicle membrane. The protein localises to the autophagosome membrane. It is found in the vacuole membrane. Its function is as follows. Ubiquitin-like modifier involved in cytoplasm to vacuole transport (Cvt) vesicles and autophagosome formation. With ATG4, mediates the delivery of the vesicles and autophagosomes to the vacuole via the microtubule cytoskeleton. Required for selective autophagic degradation of the nucleus (nucleophagy) as well as for mitophagy which contributes to regulate mitochondrial quantity and quality by eliminating the mitochondria to a basal level to fulfill cellular energy requirements and preventing excess ROS production. Also participates in membrane fusion events that take place in the early secretory pathway. Also involved in endoplasmic reticulum-specific autophagic process and is essential for the survival of cells subjected to severe ER stress. The ATG8-PE conjugate mediates tethering between adjacent membranes and stimulates membrane hemifusion, leading to expansion of the autophagosomal membrane during autophagy. Moreover not only conjugation, but also subsequent ATG8-PE deconjugation is an important step required to facilitate multiple events during macroautophagy, and especially for efficient autophagosome biogenesis, the assembly of ATG9-containing tubulovesicular clusters into phagophores/autophagosomes, and for the disassembly of PAS-associated ATG components. Autophagy is required for conidiation, aerial mycelial growth, and pseudothecia formation, but not for host invasion. This is Autophagy-related protein 8 from Cochliobolus heterostrophus (strain C4 / ATCC 48331 / race T) (Southern corn leaf blight fungus).